The following is a 401-amino-acid chain: Elongation factor Tu (401 aa).

The 200-residue stretch at 10–209 (KPHINVGTIG…AVDEYIPTPQ (200 aa)) folds into the tr-type G domain. The segment at 19 to 26 (GHVDHGKT) is G1. 19–26 (GHVDHGKT) is a binding site for GTP. Residue Thr-26 coordinates Mg(2+). The G2 stretch occupies residues 60 to 64 (GITIA). Residues 81–84 (DCPG) form a G3 region. GTP is bound by residues 81–85 (DCPGH) and 136–139 (NKVD). The G4 stretch occupies residues 136–139 (NKVD). The tract at residues 174–176 (SAR) is G5.

This sequence belongs to the TRAFAC class translation factor GTPase superfamily. Classic translation factor GTPase family. EF-Tu/EF-1A subfamily. Monomer.

The protein localises to the cytoplasm. The enzyme catalyses GTP + H2O = GDP + phosphate + H(+). In terms of biological role, GTP hydrolase that promotes the GTP-dependent binding of aminoacyl-tRNA to the A-site of ribosomes during protein biosynthesis. The sequence is that of Elongation factor Tu from Chloroflexus aurantiacus (strain ATCC 29366 / DSM 635 / J-10-fl).